We begin with the raw amino-acid sequence, 227 residues long: Urease accessory protein UreF (227 aa).

It belongs to the UreF family. In terms of assembly, ureD, UreF and UreG form a complex that acts as a GTP-hydrolysis-dependent molecular chaperone, activating the urease apoprotein by helping to assemble the nickel containing metallocenter of UreC. The UreE protein probably delivers the nickel.

The protein resides in the cytoplasm. Required for maturation of urease via the functional incorporation of the urease nickel metallocenter. The polypeptide is Urease accessory protein UreF (Actinobacillus pleuropneumoniae serotype 3 (strain JL03)).